The sequence spans 965 residues: Glycine dehydrogenase (decarboxylating) (965 aa).

At K711 the chain carries N6-(pyridoxal phosphate)lysine.

It belongs to the GcvP family. In terms of assembly, the glycine cleavage system is composed of four proteins: P, T, L and H. Pyridoxal 5'-phosphate serves as cofactor.

It carries out the reaction N(6)-[(R)-lipoyl]-L-lysyl-[glycine-cleavage complex H protein] + glycine + H(+) = N(6)-[(R)-S(8)-aminomethyldihydrolipoyl]-L-lysyl-[glycine-cleavage complex H protein] + CO2. The glycine cleavage system catalyzes the degradation of glycine. The P protein binds the alpha-amino group of glycine through its pyridoxal phosphate cofactor; CO(2) is released and the remaining methylamine moiety is then transferred to the lipoamide cofactor of the H protein. This chain is Glycine dehydrogenase (decarboxylating), found in Psychrobacter arcticus (strain DSM 17307 / VKM B-2377 / 273-4).